Consider the following 503-residue polypeptide: Maturase K (503 aa).

This sequence belongs to the intron maturase 2 family. MatK subfamily.

The protein localises to the plastid. It localises to the chloroplast. Usually encoded in the trnK tRNA gene intron. Probably assists in splicing its own and other chloroplast group II introns. This Rosa carolina (Pasture rose) protein is Maturase K.